Consider the following 122-residue polypeptide: Large ribosomal subunit protein uL14 (122 aa).

It belongs to the universal ribosomal protein uL14 family. In terms of assembly, part of the 50S ribosomal subunit. Forms a cluster with proteins L3 and L19. In the 70S ribosome, L14 and L19 interact and together make contacts with the 16S rRNA in bridges B5 and B8.

Functionally, binds to 23S rRNA. Forms part of two intersubunit bridges in the 70S ribosome. This chain is Large ribosomal subunit protein uL14, found in Coxiella burnetii (strain RSA 331 / Henzerling II).